The primary structure comprises 356 residues: Tyrosine recombinase XerS (356 aa).

The 106-residue stretch at 16-121 folds into the Core-binding (CB) domain; sequence LMPWFVLEYY…ALSSLYKYLT (106 aa). Positions 169 to 354 constitute a Tyr recombinase domain; that stretch reads KFLDYVENEY…VNDEQKNALD (186 aa). Catalysis depends on residues R210, K234, H306, R309, and H332. Y341 serves as the catalytic O-(3'-phospho-DNA)-tyrosine intermediate.

It belongs to the 'phage' integrase family. XerS subfamily.

It localises to the cytoplasm. With respect to regulation, ftsK is required for recombination. Site-specific tyrosine recombinase, which acts by catalyzing the cutting and rejoining of the recombining DNA molecules. Essential to convert dimers of the bacterial chromosome into monomers to permit their segregation at cell division. This chain is Tyrosine recombinase XerS, found in Streptococcus thermophilus (strain CNRZ 1066).